Here is a 135-residue protein sequence, read N- to C-terminus: HTH-type transcriptional regulator CueR (135 aa).

The 69-residue stretch at 1 to 69 folds into the HTH merR-type domain; that stretch reads MNISDVAKIT…LEESGELVNL (69 aa). Residues 4 to 23 constitute a DNA-binding region (H-T-H motif); sequence SDVAKITGLTSKAIRFYEEK. Residues Cys-112 and Cys-120 each coordinate Cu(+).

As to quaternary structure, homodimer.

Its subcellular location is the cytoplasm. Regulates the transcription of the copA and cueO genes. It detects cytoplasmic copper stress and activates transcription in response to increasing copper concentrations. This Escherichia coli O157:H7 protein is HTH-type transcriptional regulator CueR (cueR).